Reading from the N-terminus, the 103-residue chain is Pro-glucagon (103 aa).

It belongs to the glucagon family.

Its subcellular location is the secreted. Functionally, plays a key role in glucose metabolism and homeostasis. Regulates blood glucose by increasing gluconeogenesis and decreasing glycolysis. The protein is Pro-glucagon (gcg) of Aquarana catesbeiana (American bullfrog).